Here is a 275-residue protein sequence, read N- to C-terminus: uncharacterized protein (275 aa).

6 helical membrane-spanning segments follow: residues L25–A45, L70–I90, I107–V127, F149–F169, I203–A223, and I247–I267.

The protein resides in the cell membrane. This is an uncharacterized protein from Bacillus subtilis (strain 168).